Consider the following 473-residue polypeptide: Photosystem II CP43 reaction center protein (473 aa).

The propeptide occupies 1 to 14 (MKTLYSLRRFYHVE). Residue Thr15 is modified to N-acetylthreonine. Thr15 carries the phosphothreonine modification. The next 5 helical transmembrane spans lie at 69-93 (LFEV…PHLA), 134-155 (LLGP…KDRN), 178-200 (KALY…RKIT), 255-275 (KPFA…LSYS), and 291-312 (WFNN…ASQA). Position 367 (Glu367) interacts with [CaMn4O5] cluster. The chain crosses the membrane as a helical span at residues 447 to 471 (RARAAAAGFEKGIDRDFEPVLSMTP).

It belongs to the PsbB/PsbC family. PsbC subfamily. As to quaternary structure, PSII is composed of 1 copy each of membrane proteins PsbA, PsbB, PsbC, PsbD, PsbE, PsbF, PsbH, PsbI, PsbJ, PsbK, PsbL, PsbM, PsbT, PsbX, PsbY, PsbZ, Psb30/Ycf12, at least 3 peripheral proteins of the oxygen-evolving complex and a large number of cofactors. It forms dimeric complexes. Binds multiple chlorophylls and provides some of the ligands for the Ca-4Mn-5O cluster of the oxygen-evolving complex. It may also provide a ligand for a Cl- that is required for oxygen evolution. PSII binds additional chlorophylls, carotenoids and specific lipids. is required as a cofactor.

It localises to the plastid. Its subcellular location is the chloroplast thylakoid membrane. Functionally, one of the components of the core complex of photosystem II (PSII). It binds chlorophyll and helps catalyze the primary light-induced photochemical processes of PSII. PSII is a light-driven water:plastoquinone oxidoreductase, using light energy to abstract electrons from H(2)O, generating O(2) and a proton gradient subsequently used for ATP formation. The polypeptide is Photosystem II CP43 reaction center protein (Aethionema cordifolium (Lebanon stonecress)).